We begin with the raw amino-acid sequence, 384 residues long: 23S rRNA (uracil(747)-C(5))-methyltransferase RlmC (384 aa).

Residues cysteine 7, cysteine 15, cysteine 18, and cysteine 94 each contribute to the [4Fe-4S] cluster site. S-adenosyl-L-methionine is bound by residues glutamine 219, phenylalanine 248, glutamate 269, and asparagine 316. Cysteine 343 acts as the Nucleophile in catalysis.

The protein belongs to the class I-like SAM-binding methyltransferase superfamily. RNA M5U methyltransferase family. RlmC subfamily.

The enzyme catalyses uridine(747) in 23S rRNA + S-adenosyl-L-methionine = 5-methyluridine(747) in 23S rRNA + S-adenosyl-L-homocysteine + H(+). Catalyzes the formation of 5-methyl-uridine at position 747 (m5U747) in 23S rRNA. In Shewanella sp. (strain MR-7), this protein is 23S rRNA (uracil(747)-C(5))-methyltransferase RlmC.